A 237-amino-acid polypeptide reads, in one-letter code: Uridylate kinase (237 aa).

11-14 (KLSG) is an ATP binding site. Position 53 (glycine 53) interacts with UMP. The ATP site is built by glycine 54 and arginine 58. Residues aspartate 73 and 134 to 141 (TGNPFFTT) contribute to the UMP site. ATP-binding residues include threonine 161, tyrosine 167, and aspartate 170.

It belongs to the UMP kinase family. Homohexamer.

The protein localises to the cytoplasm. The catalysed reaction is UMP + ATP = UDP + ADP. The protein operates within pyrimidine metabolism; CTP biosynthesis via de novo pathway; UDP from UMP (UMPK route): step 1/1. With respect to regulation, inhibited by UTP. Functionally, catalyzes the reversible phosphorylation of UMP to UDP. The protein is Uridylate kinase of Burkholderia mallei (strain NCTC 10247).